A 298-amino-acid chain; its full sequence is Acetyl-coenzyme A carboxylase carboxyl transferase subunit beta (298 aa).

Residues 1–21 (MNQEVKSGKVLSPSTPWTQRP) form a disordered region. Residues 41–298 (PTIECPECHA…RLVSKLMNLP (258 aa)) form the CoA carboxyltransferase N-terminal domain. Zn(2+) is bound by residues C45, C48, C64, and C67. The segment at 45–67 (CPECHALVTRTAISFNAYVCPQC) adopts a C4-type zinc-finger fold.

It belongs to the AccD/PCCB family. Acetyl-CoA carboxylase is a heterohexamer composed of biotin carboxyl carrier protein (AccB), biotin carboxylase (AccC) and two subunits each of ACCase subunit alpha (AccA) and ACCase subunit beta (AccD). The cofactor is Zn(2+).

The protein resides in the cytoplasm. It catalyses the reaction N(6)-carboxybiotinyl-L-lysyl-[protein] + acetyl-CoA = N(6)-biotinyl-L-lysyl-[protein] + malonyl-CoA. The protein operates within lipid metabolism; malonyl-CoA biosynthesis; malonyl-CoA from acetyl-CoA: step 1/1. Component of the acetyl coenzyme A carboxylase (ACC) complex. Biotin carboxylase (BC) catalyzes the carboxylation of biotin on its carrier protein (BCCP) and then the CO(2) group is transferred by the transcarboxylase to acetyl-CoA to form malonyl-CoA. The chain is Acetyl-coenzyme A carboxylase carboxyl transferase subunit beta from Acinetobacter baumannii (strain AYE).